The chain runs to 347 residues: Druantia protein DruD (347 aa).

It localises to the cytoplasm. In terms of biological role, component of antiviral defense system Druantia type I, composed of DruA, DruB, DruC, DruD and DruE. Expression of Druantia in E.coli (strain MG1655) confers resistance to phage lambda, SECphi18, SECphi27 and T4. The protein is Druantia protein DruD of Escherichia coli (strain UMEA 4076-1).